Reading from the N-terminus, the 562-residue chain is Transcriptional adapter 2A (562 aa).

Residues 91–146 (KDANRCATCRCSLTEPYIKCSECLDTLLCLQCFSRGKEAFSHRNNHAYIIVRDNIQ) form a ZZ-type zinc finger. Residues C96, C99, C110, C113, C119, C122, H132, and H136 each contribute to the Zn(2+) site. The region spanning 154 to 198 (WTARDERILLKTLRTHGYGNWEAVSQALDQRHEPAEVRRHYHDCY) is the SANT domain. The SWIRM domain maps to 471-562 (CLTPTEYNFS…GHISRPPSYG (92 aa)).

As to quaternary structure, component of the Ada2a-containing (ATAC) complex composed of at least Ada2a, Atac1, Hcf, Ada3, Gcn5, Mocs2B, Charac-14, Atac3, Atac2, NC2beta and wds. Component of a complex that does not include Gcn5 or Ada3.

Its subcellular location is the nucleus. The protein resides in the chromosome. Component of the histone acetyltransferase (HAT) complex ATAC; predominantly involved in acetylation of histone H4, including at Lys-6 (H4K5ac) and Lys-13 (H4K12ac). May be part of several different complexes, including Gcn5-independent complexes involved in RNA polymerase II-dependent transcription. This chain is Transcriptional adapter 2A, found in Drosophila melanogaster (Fruit fly).